We begin with the raw amino-acid sequence, 539 residues long: MLSMIKQQGAAADSRRGQALLLNISAGKGLQNVLKTNLGPRGTLKMLVGGGGDIKLTKDGKVLLHEMQIQHPTAALIARTATAQDDITGDGTTTNVITIGELLKQSERYLQENIHPRIIAEGFELAKDRCLAFLEEFKQTSQDTLDRELLISIAKTSLRTKLPADLADQLTEQVVDALLLIHKPEQPLDLFMVEIMTMQHRTDGHCSLIKGLVLDHGTRHPDMPKKLTNCFILTCNVSLEYEKTEVNANFLYKDHETRSRMIDGEHKLVAAKCRQIIELKNHVCDTPDKNFVVINQKGIDPICLDMLAKAGIMGLRRAKRRNMERLTLACGGTAMNSLEDLTPDCLGHADLVYEQTLGEEKYTFVEGVKNPFSCTVLIKGPTKHQIEQIKDALRDGLRAVKNTIEDKCVVPGGGAFQIAAYADLMKFKETITGRTKLGIQAFADALLVVPKTLAQNSGFDPMDTIIKLQEEYAKGHIVGLDVESGEPMDPVSEGIFDQYSVLKQVYRSSPVIASQLLLIDEIIKAGKGMRGSSVPEGQE.

It belongs to the TCP-1 chaperonin family. In terms of assembly, heterooligomeric complex of about 850 to 900 kDa that forms two stacked rings, 12 to 16 nm in diameter.

It localises to the cytoplasm. In terms of biological role, molecular chaperone; assists the folding of proteins upon ATP hydrolysis. Known to play a role, in vitro, in the folding of actin and tubulin. The sequence is that of T-complex protein 1 subunit zeta (cct6) from Dictyostelium discoideum (Social amoeba).